We begin with the raw amino-acid sequence, 392 residues long: Formate-dependent phosphoribosylglycinamide formyltransferase (392 aa).

N(1)-(5-phospho-beta-D-ribosyl)glycinamide is bound by residues 22–23 and Glu-82; that span reads EL. ATP-binding positions include Arg-114, Lys-155, 160 to 165, 195 to 198, and Glu-203; these read SSGKGQ and EKII. Residues 119–308 enclose the ATP-grasp domain; that stretch reads VLVSKKLNIL…EFALHVRSFL (190 aa). The Mg(2+) site is built by Glu-267 and Glu-279. Residues Asp-286, Lys-355, and 362-363 contribute to the N(1)-(5-phospho-beta-D-ribosyl)glycinamide site; that span reads RR.

Belongs to the PurK/PurT family. In terms of assembly, homodimer.

The catalysed reaction is N(1)-(5-phospho-beta-D-ribosyl)glycinamide + formate + ATP = N(2)-formyl-N(1)-(5-phospho-beta-D-ribosyl)glycinamide + ADP + phosphate + H(+). It functions in the pathway purine metabolism; IMP biosynthesis via de novo pathway; N(2)-formyl-N(1)-(5-phospho-D-ribosyl)glycinamide from N(1)-(5-phospho-D-ribosyl)glycinamide (formate route): step 1/1. Functionally, involved in the de novo purine biosynthesis. Catalyzes the transfer of formate to 5-phospho-ribosyl-glycinamide (GAR), producing 5-phospho-ribosyl-N-formylglycinamide (FGAR). Formate is provided by PurU via hydrolysis of 10-formyl-tetrahydrofolate. In Wigglesworthia glossinidia brevipalpis, this protein is Formate-dependent phosphoribosylglycinamide formyltransferase.